Consider the following 330-residue polypeptide: Ferredoxin--NADP reductase (330 aa).

Positions 35, 43, 48, 90, 123, 285, and 326 each coordinate FAD.

It belongs to the ferredoxin--NADP reductase type 2 family. Homodimer. FAD is required as a cofactor.

It catalyses the reaction 2 reduced [2Fe-2S]-[ferredoxin] + NADP(+) + H(+) = 2 oxidized [2Fe-2S]-[ferredoxin] + NADPH. The polypeptide is Ferredoxin--NADP reductase (Streptococcus pyogenes serotype M28 (strain MGAS6180)).